The following is a 247-amino-acid chain: Centromere protein H (247 aa).

Methionine 1 carries the post-translational modification N-acetylmethionine. A compositionally biased stretch (acidic residues) spans 1-14 (MEEQPQMQDADEPA). A disordered region spans residues 1-34 (MEEQPQMQDADEPADSGGEGRAGGPPQVAGAQAA). Position 16 is a phosphoserine (serine 16). Positions 24–34 (GPPQVAGAQAA) are enriched in low complexity. Positions 47-192 (RAQTKQQLLE…KIDLDSMENS (146 aa)) form a coiled coil. A Glycyl lysine isopeptide (Lys-Gly) (interchain with G-Cter in SUMO2) cross-link involves residue lysine 67. Threonine 68 is subject to Phosphothreonine.

The protein belongs to the CENP-H/MCM16 family. As to quaternary structure, self-associates. Component of the CENPA-NAC complex, at least composed of CENPA, CENPC, CENPH, CENPM, CENPN, CENPT and CENPU. The CENPA-NAC complex interacts with the CENPA-CAD complex, composed of CENPI, CENPK, CENPL, CENPO, CENPP, CENPQ, CENPR and CENPS. Interacts directly with CENPK. Interacts with KIF2C and NDC80. Interacts with TRIM36.

Its subcellular location is the nucleus. It is found in the chromosome. The protein resides in the centromere. The protein localises to the kinetochore. Functionally, component of the CENPA-NAC (nucleosome-associated) complex, a complex that plays a central role in assembly of kinetochore proteins, mitotic progression and chromosome segregation. The CENPA-NAC complex recruits the CENPA-CAD (nucleosome distal) complex and may be involved in incorporation of newly synthesized CENPA into centromeres. Required for chromosome congression and efficiently align the chromosomes on a metaphase plate. The sequence is that of Centromere protein H from Homo sapiens (Human).